The sequence spans 484 residues: Cytochrome P450 monooxygenase poxD (484 aa).

The chain crosses the membrane as a helical span at residues 2–24 (VSPVVLATTAMIVVFLLAQRYLS). A heme-binding site is contributed by C429.

Belongs to the cytochrome P450 family. The cofactor is heme.

Its subcellular location is the membrane. It functions in the pathway secondary metabolite biosynthesis. Functionally, cytochrome P450 monooxygenase; part of the gene cluster that mediates the biosynthesis of oxaleimides, cytotoxic compounds containing an unusual disubstituted succinimide moiety. The first step of the pathway is provided by the HR-PKS poxF that serves in a new mode of collaborative biosynthesis with the PKS-NRPS poxE, by providing the olefin containing amino acid substrate via the synthesis of an ACP-bound dec-4-enoate. The cytochrome P450 monooxygenase poxM-catalyzed oxidation at the alpha-position creates the enzyme-bound 2-hydroxydec-4-enoyl-ACP thioester, which may be prone to spontaneous hydrolysis to yield 2-hydroxydec-4-enoic acid due to increased electrophilicity of the carbonyl. 2-hydroxydec-4-enoic acid can then be further oxidized by poxM to yield the alpha-ketoacid 2-oxodec-4-enoicacid, which is reductively aminated by the aminotransferase poxL to yield (S,E)-2-aminodec-4-enoic acid. The Hybrid PKS-NRPS synthetase poxE then performs condensation between the octaketide product of its PKS modules and the amino group of (S,E)-2-aminodec-4-enoic acid which is activated and incorporated by the adenylation domain. The resulting aminoacyl product can be cyclized by the Diels-Alderase PoxQ and reductively released by the reductive (R) domain of poxE to yield an aldehyde intermediate. The released aldehyde is then substrate for a Knoevenagel condensation by the hydrolyase poxO followed by an oxidation at the 5-position of the pyrrolidone ring. The presence of the olefin from the amino acid building block allows for migration of the substituted allyl group to occur. This allylic transposition reaction takes place in a conjugate addition, semipinacol-like fashion to yield a succinimide intermediate. Iterative two-electron oxidations of the C7 methyl of the succinimide intermediate to the carboxylic acid can be catalyzed by one of two remaining cytochrome P450 monooxygenasess poxC or poxD to yield oxaleimide A. Subsequent oxidation yields the maleimide scaffold oxaleimide I. Both oxaleimide A and oxaleimide I can undergo oxidative modifications in the decalin ring to yield the series of products oxaleimides B to H. In Penicillium oxalicum, this protein is Cytochrome P450 monooxygenase poxD.